The chain runs to 828 residues: MTDNQENKPKKLTLSNTKLSLNKSFDSLASTQSFVNAKSKTLVEVRKSYSGSTTTLSLNKEKGSLETGSSSGSEEFNRRLSILKKAAEQSKLNDNSQISTLSKLASINQSIASQEDPIEVEQEESSDTNKVKEEPKIEEVKDIEESTLQTPKKKEDIFVKSPLVGTRTRYGIESEKTVDKVTENKVIAPKPKVEESRKFKKTDLFNMVGDDENDNRNRTRSLASIKRAREKEKRKSLVQVPEKVYREITLPEVIGVGDFANAMSERVSDVIKELMKLGILANASQTIDADTAELVATHLGHAVKRVQESDVENILITNDKEEDLRSRAPVVTVMGHVDHGKTSLLDALKSTDVASGETGGITQHIGAYRVTLADGRAITFIDTPGHEAFSEMRSRGAGVTDIVIIVVAADDGIKPQTVEAINHAKAANVPIIVAINKIDKPDIDIERIKNELYMYEIIGEEAGGDVMVIPISALKKINLDKLEEAILLIAEMQNLKASPFGSASGVVIESKIEKGRGALTTMLVQRGTLKSGDIIIAGTAYGKVKKMTNDKGIEVLEATPSVPIEIQGLSHVPHAGDMFNVVQTEKQAKDIAEYRERVAKEKKISIAPRSSLEDLFLKASGSSKIKELPLIIKGDVHGSVEAIAGSLLKLPNDEVKLRILHSGVGPITESDVSLAHASSAIIVGFNVRAGANAKTAAEKEKVEIRYYSIIYDLLDDVKAIMSGMLDPIIREQYIGSVEIRQIFNITKIGKIAGSYVTRGIIKKGAGVRLLRDNIVIHEGKLKTLKRFKEEVKEVREGYECGIAFENYEDIREGDTVEVFELIQEKKQL.

Disordered stretches follow at residues 48–76 (SYSG…SEEF) and 112–148 (ASQE…ESTL). Residues 49 to 58 (YSGSTTTLSL) are compositionally biased toward polar residues. Over residues 65 to 74 (LETGSSSGSE) the composition is skewed to low complexity. The segment covering 116–126 (DPIEVEQEESS) has biased composition (acidic residues). The span at 127 to 144 (DTNKVKEEPKIEEVKDIE) shows a compositional bias: basic and acidic residues. Residues 326–496 (SRAPVVTVMG…LLIAEMQNLK (171 aa)) form the tr-type G domain. The G1 stretch occupies residues 335-342 (GHVDHGKT). 335-342 (GHVDHGKT) is a binding site for GTP. Residues 360 to 364 (GITQH) form a G2 region. The tract at residues 382–385 (DTPG) is G3. Residues 382–386 (DTPGH) and 436–439 (NKID) contribute to the GTP site. Positions 436-439 (NKID) are G4. The G5 stretch occupies residues 472–474 (SAL).

This sequence belongs to the TRAFAC class translation factor GTPase superfamily. Classic translation factor GTPase family. IF-2 subfamily.

It is found in the cytoplasm. Functionally, one of the essential components for the initiation of protein synthesis. Protects formylmethionyl-tRNA from spontaneous hydrolysis and promotes its binding to the 30S ribosomal subunits. Also involved in the hydrolysis of GTP during the formation of the 70S ribosomal complex. This Rickettsia bellii (strain OSU 85-389) protein is Translation initiation factor IF-2.